The following is a 188-amino-acid chain: MKLVPVALLYLGSLAFLGVDTARLDVAAEFRKKWNKWALSRGKRELRESSSYPTGLADVKAGPVQTLIRPQDVKGASRSPQASSPDAARIRVKRYRQSLNNFQGLRSFGCRFGTCTVQKLAHQIYHFTDKDKDGSAPRSKISPQGYGRRRRRSLPEAGLGRTLLQPPEPKLRGAPDSRVHQVLATLRI.

Positions 1-21 are cleaved as a signal peptide; the sequence is MKLVPVALLYLGSLAFLGVDT. R41 carries the arginine amide modification. Positions 45–92 are excised as a propeptide; that stretch reads ELRESSSYPTGLADVKAGPVQTLIRPQDVKGASRSPQASSPDAARIRV. The disordered stretch occupies residues 69–89; the sequence is RPQDVKGASRSPQASSPDAAR. C110 and C115 are oxidised to a cystine. The segment at 129 to 175 is disordered; sequence DKDKDGSAPRSKISPQGYGRRRRRSLPEAGLGRTLLQPPEPKLRGAP. Tyrosine amide is present on Y146. A propeptide spans 153-188 (preproAM C-terminal fragment); sequence SLPEAGLGRTLLQPPEPKLRGAPDSRVHQVLATLRI.

Belongs to the adrenomedullin family.

Its subcellular location is the secreted. In terms of biological role, adrenomedullin/ADM and proadrenomedullin N-20 terminal peptide/PAMP are peptide hormones that act as potent hypotensive and vasodilatator agents. Numerous actions have been reported most related to the physiologic control of fluid and electrolyte homeostasis. Its function is as follows. ADM function is mediated by the CALCRL-RAMP2 and CALCRL-RAMP3 receptor complexes with ADM showing the highest potency for the CALCRL-RAMP2 complex. The protein is Pro-adrenomedullin (ADM) of Bos taurus (Bovine).